The sequence spans 327 residues: uncharacterized protein (327 aa).

The tract at residues 129-306 (TPLQNQEATT…DNKKTVTTSS (178 aa)) is disordered. Polar residues predominate over residues 130-144 (PLQNQEATTSPTIES). 2 stretches are compositionally biased toward basic and acidic residues: residues 184 to 196 (KSVE…DRNV) and 233 to 276 (TKDE…EKIV).

This is an uncharacterized protein from Caenorhabditis elegans.